The primary structure comprises 453 residues: Phosphoglucosamine mutase (453 aa).

The active-site Phosphoserine intermediate is serine 110. Mg(2+)-binding residues include serine 110, aspartate 247, aspartate 249, and aspartate 251. A Phosphoserine modification is found at serine 110.

It belongs to the phosphohexose mutase family. Requires Mg(2+) as cofactor. Post-translationally, activated by phosphorylation.

It carries out the reaction alpha-D-glucosamine 1-phosphate = D-glucosamine 6-phosphate. In terms of biological role, catalyzes the conversion of glucosamine-6-phosphate to glucosamine-1-phosphate. This is Phosphoglucosamine mutase from Tropheryma whipplei (strain TW08/27) (Whipple's bacillus).